The sequence spans 203 residues: Large ribosomal subunit protein bL25 (203 aa).

This sequence belongs to the bacterial ribosomal protein bL25 family. CTC subfamily. In terms of assembly, part of the 50S ribosomal subunit; part of the 5S rRNA/L5/L18/L25 subcomplex. Contacts the 5S rRNA. Binds to the 5S rRNA independently of L5 and L18.

This is one of the proteins that binds to the 5S RNA in the ribosome where it forms part of the central protuberance. In Rickettsia prowazekii (strain Madrid E), this protein is Large ribosomal subunit protein bL25.